A 200-amino-acid chain; its full sequence is Recombination protein RecR (200 aa).

A C4-type zinc finger spans residues 58–73; sequence CSVCGNLTDTDPCFIC. A Toprim domain is found at 81–176; sequence DLLCVVERPR…SVTRIAHGLP (96 aa).

Belongs to the RecR family.

Functionally, may play a role in DNA repair. It seems to be involved in an RecBC-independent recombinational process of DNA repair. It may act with RecF and RecO. This chain is Recombination protein RecR, found in Pelotomaculum thermopropionicum (strain DSM 13744 / JCM 10971 / SI).